Reading from the N-terminus, the 215-residue chain is uncharacterized protein (215 aa).

Residues 1–17 form the signal peptide; the sequence is MKKVLASATILSLMLVG. Positions 17–110 are disordered; the sequence is GCSNGGNDES…NKQQQSVQDN (94 aa). Cys-18 carries the N-palmitoyl cysteine lipid modification. Cys-18 carries the S-diacylglycerol cysteine lipid modification. Residues 25-69 are compositionally biased toward basic and acidic residues; sequence ESSHKDDSSKTEQKDKSSSQHDSKKDSKRNDTNNKQDNQENKSNK. Over residues 70 to 95 the composition is skewed to polar residues; it reads EQTSNQNSNAGEQRTSERPTTNSNGI. The segment covering 96-110 has biased composition (low complexity); the sequence is SSDNQNKQQQSVQDN.

It is found in the cell membrane. This is an uncharacterized protein from Staphylococcus epidermidis (strain ATCC 12228 / FDA PCI 1200).